Here is a 305-residue protein sequence, read N- to C-terminus: Probable cell division protein WhiA (305 aa).

Residues 269 to 302 (TIKELGELLEPSLGKSGVNHRLRKLVEQANELRK) constitute a DNA-binding region (H-T-H motif).

It belongs to the WhiA family.

Its function is as follows. Involved in cell division and chromosome segregation. This chain is Probable cell division protein WhiA, found in Lactococcus lactis subsp. lactis (strain IL1403) (Streptococcus lactis).